Here is a 382-residue protein sequence, read N- to C-terminus: D-galactonate dehydratase (382 aa).

Asp-183 contacts Mg(2+). The Proton donor role is filled by His-185. Glu-209 and Glu-235 together coordinate Mg(2+). His-285 functions as the Proton acceptor in the catalytic mechanism.

Belongs to the mandelate racemase/muconate lactonizing enzyme family. GalD subfamily. It depends on Mg(2+) as a cofactor.

The enzyme catalyses D-galactonate = 2-dehydro-3-deoxy-D-galactonate + H2O. The protein operates within carbohydrate acid metabolism; D-galactonate degradation; D-glyceraldehyde 3-phosphate and pyruvate from D-galactonate: step 1/3. Functionally, catalyzes the dehydration of D-galactonate to 2-keto-3-deoxy-D-galactonate. The polypeptide is D-galactonate dehydratase (Cronobacter sakazakii (strain ATCC BAA-894) (Enterobacter sakazakii)).